Reading from the N-terminus, the 164-residue chain is UPF0304 protein PC1_2778 (164 aa).

It belongs to the UPF0304 family.

In Pectobacterium carotovorum subsp. carotovorum (strain PC1), this protein is UPF0304 protein PC1_2778.